The following is a 742-amino-acid chain: Phosphoribosylformylglycinamidine synthase subunit PurL (742 aa).

Histidine 53 is a catalytic residue. Residues tyrosine 56 and lysine 95 each contribute to the ATP site. Residue glutamate 97 coordinates Mg(2+). Residues 98-101 and arginine 120 contribute to the substrate site; that span reads SHNH. Histidine 99 acts as the Proton acceptor in catalysis. Aspartate 121 is a Mg(2+) binding site. Glutamine 245 is a substrate binding site. A Mg(2+)-binding site is contributed by aspartate 275. 319–321 is a substrate binding site; that stretch reads ESQ. Residues aspartate 502 and glycine 539 each contribute to the ATP site. Residue asparagine 540 participates in Mg(2+) binding. Residue serine 542 participates in substrate binding.

The protein belongs to the FGAMS family. In terms of assembly, monomer. Part of the FGAM synthase complex composed of 1 PurL, 1 PurQ and 2 PurS subunits.

Its subcellular location is the cytoplasm. The enzyme catalyses N(2)-formyl-N(1)-(5-phospho-beta-D-ribosyl)glycinamide + L-glutamine + ATP + H2O = 2-formamido-N(1)-(5-O-phospho-beta-D-ribosyl)acetamidine + L-glutamate + ADP + phosphate + H(+). It functions in the pathway purine metabolism; IMP biosynthesis via de novo pathway; 5-amino-1-(5-phospho-D-ribosyl)imidazole from N(2)-formyl-N(1)-(5-phospho-D-ribosyl)glycinamide: step 1/2. In terms of biological role, part of the phosphoribosylformylglycinamidine synthase complex involved in the purines biosynthetic pathway. Catalyzes the ATP-dependent conversion of formylglycinamide ribonucleotide (FGAR) and glutamine to yield formylglycinamidine ribonucleotide (FGAM) and glutamate. The FGAM synthase complex is composed of three subunits. PurQ produces an ammonia molecule by converting glutamine to glutamate. PurL transfers the ammonia molecule to FGAR to form FGAM in an ATP-dependent manner. PurS interacts with PurQ and PurL and is thought to assist in the transfer of the ammonia molecule from PurQ to PurL. In Lactobacillus acidophilus (strain ATCC 700396 / NCK56 / N2 / NCFM), this protein is Phosphoribosylformylglycinamidine synthase subunit PurL.